The primary structure comprises 392 residues: Glyceraldehyde-3-phosphate dehydrogenase A, chloroplastic (392 aa).

Residues 1 to 56 (NSSLQVSNKGFSEFSGLRTSSAIPFGRKTNDDLLSVVAFQTSVIGGGNSKRGVVEA) constitute a chloroplast transit peptide. NADP(+) is bound by residues 67 to 68 (RI), Asp-91, and Arg-136. D-glyceraldehyde 3-phosphate contacts are provided by residues 208–210 (SCT), Thr-239, Arg-254, 267–268 (TG), and Arg-290. Cys-209 (nucleophile) is an active-site residue. Asn-372 contributes to the NADP(+) binding site.

It belongs to the glyceraldehyde-3-phosphate dehydrogenase family. In terms of assembly, tetramer of either four A chains (GAPDH 2) or two A and two B chains (GAPDH 1).

The protein localises to the plastid. It localises to the chloroplast. It carries out the reaction D-glyceraldehyde 3-phosphate + phosphate + NADP(+) = (2R)-3-phospho-glyceroyl phosphate + NADPH + H(+). Its pathway is carbohydrate biosynthesis; Calvin cycle. The protein is Glyceraldehyde-3-phosphate dehydrogenase A, chloroplastic (GAPA) of Nicotiana tabacum (Common tobacco).